A 515-amino-acid polypeptide reads, in one-letter code: ATP synthase subunit alpha (515 aa).

Position 171–178 (171–178 (GDRQTGKT)) interacts with ATP.

Belongs to the ATPase alpha/beta chains family. As to quaternary structure, F-type ATPases have 2 components, CF(1) - the catalytic core - and CF(0) - the membrane proton channel. CF(1) has five subunits: alpha(3), beta(3), gamma(1), delta(1), epsilon(1). CF(0) has three main subunits: a(1), b(2) and c(9-12). The alpha and beta chains form an alternating ring which encloses part of the gamma chain. CF(1) is attached to CF(0) by a central stalk formed by the gamma and epsilon chains, while a peripheral stalk is formed by the delta and b chains.

It is found in the cell inner membrane. The enzyme catalyses ATP + H2O + 4 H(+)(in) = ADP + phosphate + 5 H(+)(out). Functionally, produces ATP from ADP in the presence of a proton gradient across the membrane. The alpha chain is a regulatory subunit. This Coxiella burnetii (strain CbuK_Q154) (Coxiella burnetii (strain Q154)) protein is ATP synthase subunit alpha.